A 619-amino-acid polypeptide reads, in one-letter code: Chaperone protein DnaK (619 aa).

Position 175 is a phosphothreonine; by autocatalysis (T175). The disordered stretch occupies residues 578-619 (NGGAQGEGFDPNNMGGANAGTGAANSNDDNVVDADFEVQDDK). Over residues 589–606 (NNMGGANAGTGAANSNDD) the composition is skewed to low complexity. A compositionally biased stretch (acidic residues) spans 607-619 (NVVDADFEVQDDK).

It belongs to the heat shock protein 70 family.

Its function is as follows. Acts as a chaperone. This chain is Chaperone protein DnaK, found in Clostridium perfringens (strain SM101 / Type A).